Consider the following 374-residue polypeptide: Inner membrane transport permease YhhJ (374 aa).

Residues 1–22 are Cytoplasmic-facing; sequence MRHLRNIFNLGIKELRSLLGDK. Residues 23-43 traverse the membrane as a helical segment; sequence AMLTLIVFSFTVSVYSSATVT. Topologically, residues 44-172 are periplasmic; the sequence is PGSLNLAPIA…TRMRFNPNLD (129 aa). Positions 133–369 constitute an ABC transmembrane type-2 domain; the sequence is NGYIQNIING…TIALLRFRKT (237 aa). The chain crosses the membrane as a helical span at residues 173-193; sequence PAWFGGVMAIINNITMLAIVL. Residues 194–229 lie on the Cytoplasmic side of the membrane; it reads TGSALIREREHGTVEHLLVMPITPFEIMMAKIWSMG. The helical transmembrane segment at 230–250 threads the bilayer; sequence LVVLVVSGLSLVLMVKGVLGV. The Periplasmic segment spans residues 251–255; it reads PIEGS. A helical membrane pass occupies residues 256–276; that stretch reads IPLFMLGVALSLFATTSIGIF. The Cytoplasmic segment spans residues 277–283; sequence MGTIARS. Residues 284 to 304 traverse the membrane as a helical segment; the sequence is MPQLGLLVILVLLPLQMLSGG. The Periplasmic segment spans residues 305-342; sequence STPRESMPQMVQDIMLTMPTTHFVSLAQAILYRGAGFE. A helical membrane pass occupies residues 343-363; the sequence is IVWPQFLTLMAIGGAFFTIAL. Over 364-374 the chain is Cytoplasmic; it reads LRFRKTIGTMA.

This sequence belongs to the ABC-2 integral membrane protein family.

The protein localises to the cell inner membrane. The protein is Inner membrane transport permease YhhJ (yhhJ) of Escherichia coli (strain K12).